We begin with the raw amino-acid sequence, 312 residues long: Ribosomal protein L11 methyltransferase (312 aa).

S-adenosyl-L-methionine-binding residues include Thr-160, Gly-181, Asp-203, and Asn-246.

It belongs to the methyltransferase superfamily. PrmA family.

Its subcellular location is the cytoplasm. The catalysed reaction is L-lysyl-[protein] + 3 S-adenosyl-L-methionine = N(6),N(6),N(6)-trimethyl-L-lysyl-[protein] + 3 S-adenosyl-L-homocysteine + 3 H(+). Its function is as follows. Methylates ribosomal protein L11. The polypeptide is Ribosomal protein L11 methyltransferase (Staphylococcus aureus (strain USA300)).